A 151-amino-acid chain; its full sequence is Multiprotein-bridging factor 1 (151 aa).

2 disordered regions span residues 1–29 (MSDWDTNTIIGSRARAGGSGPRANVARSQ) and 78–98 (DPNVGRAISRARTDKKMSQKD). The essential for TBP-binding stretch occupies residues 41 to 119 (VVSVDKKYGS…VNDYEAARAI (79 aa)). Residues 85–139 (ISRARTDKKMSQKDLATKINEKPTVVNDYEAARAIPNQQVLSKLERALGVKLRGN) enclose the HTH cro/C1-type domain. Positions 88–98 (ARTDKKMSQKD) are enriched in basic and acidic residues. The segment at residues 96-115 (QKDLATKINEKPTVVNDYEA) is a DNA-binding region (H-T-H motif). Ser-143 is subject to Phosphoserine.

It belongs to the MBF1 family. In terms of assembly, interacts with TBP and the transcription factor GCN4. Interacts with RPS3/us3.

It is found in the cytoplasm. It localises to the nucleus. In terms of biological role, transcriptional coactivator that stimulates GCN4-dependent transcriptional activity by bridging the DNA-binding region of GCN4 and TBP (SPT15), thereby recruiting TBP to GCN4-bound promoters. Involved in induction of the ribosome quality control (RQC) pathway; a pathway that degrades nascent peptide chains during problematic translation. Required to prevent stalled ribosomes from frameshifting. The sequence is that of Multiprotein-bridging factor 1 (MBF1) from Saccharomyces cerevisiae (strain ATCC 204508 / S288c) (Baker's yeast).